We begin with the raw amino-acid sequence, 179 residues long: ATP synthase subunit delta (179 aa).

Belongs to the ATPase delta chain family. As to quaternary structure, F-type ATPases have 2 components, F(1) - the catalytic core - and F(0) - the membrane proton channel. F(1) has five subunits: alpha(3), beta(3), gamma(1), delta(1), epsilon(1). F(0) has three main subunits: a(1), b(2) and c(10-14). The alpha and beta chains form an alternating ring which encloses part of the gamma chain. F(1) is attached to F(0) by a central stalk formed by the gamma and epsilon chains, while a peripheral stalk is formed by the delta and b chains.

Its subcellular location is the cell inner membrane. Its function is as follows. F(1)F(0) ATP synthase produces ATP from ADP in the presence of a proton or sodium gradient. F-type ATPases consist of two structural domains, F(1) containing the extramembraneous catalytic core and F(0) containing the membrane proton channel, linked together by a central stalk and a peripheral stalk. During catalysis, ATP synthesis in the catalytic domain of F(1) is coupled via a rotary mechanism of the central stalk subunits to proton translocation. In terms of biological role, this protein is part of the stalk that links CF(0) to CF(1). It either transmits conformational changes from CF(0) to CF(1) or is implicated in proton conduction. This chain is ATP synthase subunit delta, found in Acidithiobacillus ferridurans.